The following is a 935-amino-acid chain: MAASRLDFGEVETFLDRHPELFEDYLMRKGKQELVDKWLQRHSSGQGASDLRPALAGASSLAQSSARGSTGIGGGAGPQGSANSHPASGGGESAGVPLSPSWASGSRGDGNLQRRASQKELRKSFARSKAIHVNRTYDEQVTSRAQEPLSSVRRRALLRKASSLPPTTAHILSALLESRVNLPQYPPTAIDYKCHLKKHNERQFFLELVKDISNDLDLTSLSYKILIFVCLMVDADRCSLFLVEGAAAGKKTLVSKFFDVHAGTPLLPCSTTENSNEVQVPWGKGIIGYVGEHGETVNIPDAYQDRRFNDEIDKLTGYKTKSLLCMPIRNSDGEIIGVAQAINKVPEGAPFTEDDEKVMQMYLPFCGIAISNAQLFAASRKEYERSRALLEVVNDLFEEQTDLEKIVKKIMHRAQTLLKCERCSVLLLEDIESPVVKFTKSFELMSPKCSADAENSFKESVEKSSYSDWLINNSIAELVASTGLPVNVSDAYQDPRFDAEADQISGFHIRSVLCVPIWNSNHQIIGVAQVLNRLDGKPFDDADQRLFEAFVIFCGLGINNTIMYDQVKKSWAKQSVALDVLSYHATCSKAEVDKFKAANIPLVSELAIDDIHFDDFSLDVDAMITAALRMFMELGMVQKFKIDYETLCRWLLTVRKNYRMVLYHNWRHAFNVCQLMFAMLTTAGFQEILTEVEILAVIVGCLCHDLDHRGTNNAFQAKSDSALAQLYGTSATLEHHHFNHAVMILQSEGHNIFANLSSKEYSDLMQLLKQSILATDLTLYFERRTEFFELVSKGAYDWSITSHRDVFRSMLMTACDLGAVTKPWEISRQVAELVTSEFFEQGDRERSELKLTPSAIFDRNRKDELPRLQLEWIDSICMPLYQALVKVNAKLKPMLDSVAANRRKWEELHQKRLQVSAASPVPSSPSPAVAGEDRL.

The tract at residues 41 to 125 (RHSSGQGASD…ASQKELRKSF (85 aa)) is disordered. Residues 54–69 (ALAGASSLAQSSARGS) are compositionally biased toward low complexity. Phosphoserine is present on residues serine 162, serine 163, and serine 239. GAF domains are found at residues 217–370 (DLTS…GIAI) and 402–558 (DLEK…GLGI). Serine 424 lines the 3',5'-cyclic GMP pocket. The PDEase domain maps to 588-912 (SKAEVDKFKA…RKWEELHQKR (325 aa)). Histidine 664 acts as the Proton donor in catalysis. Positions 668, 704, 705, and 816 each coordinate a divalent metal cation. Positions 915 to 935 (VSAASPVPSSPSPAVAGEDRL) are disordered.

This sequence belongs to the cyclic nucleotide phosphodiesterase family. The cofactor is a divalent metal cation. In terms of tissue distribution, isoform 1 is expressed in brain, heart, kidney and liver, but not in prostate. Isoform 2 is specifically expressed in testis. Isoform 3 is expressed in various tissues including brain, lung, skeletal muscle, spleen, testis and prostate.

It localises to the cytoplasm. Its subcellular location is the cytosol. The enzyme catalyses 3',5'-cyclic GMP + H2O = GMP + H(+). The catalysed reaction is 3',5'-cyclic AMP + H2O = AMP + H(+). Its activity is regulated as follows. Inhibited by 3-isobutyl-1-methylxanthine (IBMX), zaprinast and dipyridamole. cGMP acts as an allosteric activator. Functionally, plays a role in signal transduction by regulating the intracellular concentration of cyclic nucleotides cAMP and cGMP. Catalyzes the hydrolysis of both cAMP and cGMP to 5'-AMP and 5'-GMP, respectively. The protein is Dual 3',5'-cyclic-AMP and -GMP phosphodiesterase 11A of Rattus norvegicus (Rat).